The following is a 312-amino-acid chain: GATA zinc finger domain-containing protein 20 (312 aa).

Disordered regions lie at residues 1 to 45 (MGKR…PQQP) and 213 to 232 (TIGS…TNTN). Positions 29-45 (QQQQQQQEQQPQQPQQP) are enriched in low complexity. The GATA-type zinc-finger motif lies at 260–287 (CYVCGVTETPYWRRGTDEGVMVDLCNAC).

The polypeptide is GATA zinc finger domain-containing protein 20 (gtaT) (Dictyostelium discoideum (Social amoeba)).